Consider the following 622-residue polypeptide: Dopamine beta-hydroxylase (622 aa).

Residues 1–20 (MQAHLSHQPCWSSLPSPSVR) lie on the Cytoplasmic side of the membrane. A helical; Signal-anchor for type II membrane protein transmembrane segment spans residues 21–41 (EAASMYGTAVAIFLVILVAAL). Topologically, residues 42 to 621 (RGSEPPESPF…TVPITTEADA (580 aa)) are intragranular. The DOMON domain maps to 61–177 (GILELSWNVS…DTVHLVYGIL (117 aa)). Residues asparagine 68 and asparagine 188 are each glycosylated (N-linked (GlcNAc...) asparagine). Disulfide bonds link cysteine 158–cysteine 600, cysteine 236–cysteine 287, cysteine 273–cysteine 299, cysteine 394–cysteine 507, cysteine 398–cysteine 569, and cysteine 470–cysteine 492. Tyrosine 234 is a catalytic residue. Residues histidine 266 and histidine 267 each contribute to the Cu(2+) site. Histidine 337 is a Cu(2+) binding site. Serine 350 is modified (phosphoserine; by CaMK). Histidine 416 is a catalytic residue. Cu(2+)-binding residues include histidine 416 and histidine 418. Asparagine 476 carries N-linked (GlcNAc...) asparagine glycosylation. Position 491 (methionine 491) interacts with Cu(2+). N-linked (GlcNAc...) asparagine glycosylation occurs at asparagine 570. The interval 594–622 (EEPTPRCPIRQTQSPANPTVPITTEADAE) is disordered. Residues 603-615 (RQTQSPANPTVPI) show a composition bias toward polar residues.

The protein belongs to the copper type II ascorbate-dependent monooxygenase family. Homotetramer; composed of two disulfide-linked dimers. The cofactor is Cu(2+). In terms of processing, proteolytic cleavage after the membrane-anchor leads to the release of the soluble form. Post-translationally, N-glycosylated. In terms of tissue distribution, detected in adrenal gland secretory granules (at protein level). Detected in adrenal gland.

The protein resides in the cytoplasmic vesicle. It localises to the secretory vesicle lumen. Its subcellular location is the secretory vesicle. The protein localises to the chromaffin granule lumen. It is found in the secretory vesicle membrane. The protein resides in the chromaffin granule membrane. It catalyses the reaction dopamine + 2 L-ascorbate + O2 = (R)-noradrenaline + 2 monodehydro-L-ascorbate radical + H2O. The protein operates within catecholamine biosynthesis; (R)-noradrenaline biosynthesis; (R)-noradrenaline from dopamine: step 1/1. Functionally, catalyzes the hydroxylation of dopamine to noradrenaline (also known as norepinephrine), and is thus vital for regulation of these neurotransmitters. The sequence is that of Dopamine beta-hydroxylase (Dbh) from Mus musculus (Mouse).